A 186-amino-acid chain; its full sequence is MIAIIDYGSGNLASVEKALHGVVTSDPYKIDMADKIVFPGAGSFSAAVSGIKNIRDIIIEKIRNGTPYLGICLGLEILFSESEEGPGTGLSFFNERLKRFKKGIHMGWNTVEFNDNIIFSGIKKGEYFYFVHRYYAPLGSYTCGKTFFNGYFTSFININNIYAVQFHPEKSGEPGLKLLRNFGELA.

The Glutamine amidotransferase type-1 domain occupies 1–186; the sequence is MIAIIDYGSG…KLLRNFGELA (186 aa). The Nucleophile role is filled by Cys72. Residues His167 and Glu169 contribute to the active site.

Heterodimer of HisH and HisF.

It localises to the cytoplasm. It catalyses the reaction 5-[(5-phospho-1-deoxy-D-ribulos-1-ylimino)methylamino]-1-(5-phospho-beta-D-ribosyl)imidazole-4-carboxamide + L-glutamine = D-erythro-1-(imidazol-4-yl)glycerol 3-phosphate + 5-amino-1-(5-phospho-beta-D-ribosyl)imidazole-4-carboxamide + L-glutamate + H(+). It carries out the reaction L-glutamine + H2O = L-glutamate + NH4(+). The protein operates within amino-acid biosynthesis; L-histidine biosynthesis; L-histidine from 5-phospho-alpha-D-ribose 1-diphosphate: step 5/9. In terms of biological role, IGPS catalyzes the conversion of PRFAR and glutamine to IGP, AICAR and glutamate. The HisH subunit catalyzes the hydrolysis of glutamine to glutamate and ammonia as part of the synthesis of IGP and AICAR. The resulting ammonia molecule is channeled to the active site of HisF. This is Imidazole glycerol phosphate synthase subunit HisH from Picrophilus torridus (strain ATCC 700027 / DSM 9790 / JCM 10055 / NBRC 100828 / KAW 2/3).